Reading from the N-terminus, the 439-residue chain is Adenylosuccinate synthetase (439 aa).

Residues 14–20 (GDEGKGK) and 42–44 (GHT) each bind GTP. Asp15 acts as the Proton acceptor in catalysis. Asp15 and Gly42 together coordinate Mg(2+). IMP contacts are provided by residues 15–18 (DEGK), 40–43 (NAGH), Thr130, Arg144, Gln225, Thr240, and Arg304. Catalysis depends on His43, which acts as the Proton donor. 300–306 (TTTGRRR) serves as a coordination point for substrate. GTP-binding positions include Arg306, 332 to 334 (KLD), and 414 to 416 (SLG).

It belongs to the adenylosuccinate synthetase family. As to quaternary structure, homodimer. The cofactor is Mg(2+).

It is found in the cytoplasm. The catalysed reaction is IMP + L-aspartate + GTP = N(6)-(1,2-dicarboxyethyl)-AMP + GDP + phosphate + 2 H(+). It participates in purine metabolism; AMP biosynthesis via de novo pathway; AMP from IMP: step 1/2. Functionally, plays an important role in the de novo pathway of purine nucleotide biosynthesis. Catalyzes the first committed step in the biosynthesis of AMP from IMP. The chain is Adenylosuccinate synthetase from Prochlorococcus marinus (strain MIT 9303).